Reading from the N-terminus, the 706-residue chain is Elongation factor G (706 aa).

Residues 8-290 (KRYRNIGIVA…GVIEYMPSPT (283 aa)) form the tr-type G domain. Residues 17 to 24 (AHVDAGKT), 88 to 92 (DTPGH), and 142 to 145 (NKMD) contribute to the GTP site.

This sequence belongs to the TRAFAC class translation factor GTPase superfamily. Classic translation factor GTPase family. EF-G/EF-2 subfamily.

It is found in the cytoplasm. In terms of biological role, catalyzes the GTP-dependent ribosomal translocation step during translation elongation. During this step, the ribosome changes from the pre-translocational (PRE) to the post-translocational (POST) state as the newly formed A-site-bound peptidyl-tRNA and P-site-bound deacylated tRNA move to the P and E sites, respectively. Catalyzes the coordinated movement of the two tRNA molecules, the mRNA and conformational changes in the ribosome. In Chromohalobacter salexigens (strain ATCC BAA-138 / DSM 3043 / CIP 106854 / NCIMB 13768 / 1H11), this protein is Elongation factor G.